A 56-amino-acid polypeptide reads, in one-letter code: Large ribosomal subunit protein bL32 (56 aa).

The disordered stretch occupies residues 1–26 (MAVQQNKKSRSKRGMRRSHDALSTAQ). Basic residues predominate over residues 7-16 (KKSRSKRGMR).

It belongs to the bacterial ribosomal protein bL32 family.

The chain is Large ribosomal subunit protein bL32 from Shewanella denitrificans (strain OS217 / ATCC BAA-1090 / DSM 15013).